We begin with the raw amino-acid sequence, 259 residues long: Ferritin-3, chloroplastic (259 aa).

Residues 1–49 constitute a chloroplast transit peptide; that stretch reads MLLKAASTFSLLNIHGEKKDISPLFSSSSSISSPVSSGKSGNLSFPLRA. Residues 50–88 are extension peptide (EP); that stretch reads SKSSTTTTSTLSGVVFEPFEEVKKEMDLVPSGQQLSLAR. The 154-residue stretch at 89–242 folds into the Ferritin-like diiron domain; that stretch reads HLYSPECEAA…EYVSQLRRLG (154 aa). E106, E141, H144, E190, and Q224 together coordinate Fe cation.

Belongs to the ferritin family. As to quaternary structure, oligomer of 24 subunits. There are two types of subunits: L (light) chain and H (heavy) chain. The major chain can be light or heavy, depending on the species and tissue type. The functional molecule forms a roughly spherical shell with a diameter of 12 nm and contains a central cavity into which the insoluble mineral iron core is deposited.

It is found in the plastid. Its subcellular location is the chloroplast. The catalysed reaction is 4 Fe(2+) + O2 + 4 H(+) = 4 Fe(3+) + 2 H2O. In terms of biological role, stores iron in a soluble, non-toxic, readily available form. Important for iron homeostasis. Has ferroxidase activity. Iron is taken up in the ferrous form and deposited as ferric hydroxides after oxidation. This is Ferritin-3, chloroplastic (FER3) from Arabidopsis thaliana (Mouse-ear cress).